Reading from the N-terminus, the 692-residue chain is Elongation factor G (692 aa).

The tr-type G domain maps to 8–282; that stretch reads ENTRNIGIMA…AVIDYLPSPL (275 aa). Residues 17 to 24, 81 to 85, and 135 to 138 contribute to the GTP site; these read AHIDAGKT, DTPGH, and NKMD.

It belongs to the TRAFAC class translation factor GTPase superfamily. Classic translation factor GTPase family. EF-G/EF-2 subfamily.

The protein localises to the cytoplasm. Functionally, catalyzes the GTP-dependent ribosomal translocation step during translation elongation. During this step, the ribosome changes from the pre-translocational (PRE) to the post-translocational (POST) state as the newly formed A-site-bound peptidyl-tRNA and P-site-bound deacylated tRNA move to the P and E sites, respectively. Catalyzes the coordinated movement of the two tRNA molecules, the mRNA and conformational changes in the ribosome. The polypeptide is Elongation factor G (Bacillus cereus (strain G9842)).